We begin with the raw amino-acid sequence, 304 residues long: Sulfate adenylyltransferase subunit 2 (304 aa).

This sequence belongs to the PAPS reductase family. CysD subfamily. Heterodimer composed of CysD, the smaller subunit, and CysN.

The enzyme catalyses sulfate + ATP + H(+) = adenosine 5'-phosphosulfate + diphosphate. The protein operates within sulfur metabolism; hydrogen sulfide biosynthesis; sulfite from sulfate: step 1/3. In terms of biological role, with CysN forms the ATP sulfurylase (ATPS) that catalyzes the adenylation of sulfate producing adenosine 5'-phosphosulfate (APS) and diphosphate, the first enzymatic step in sulfur assimilation pathway. APS synthesis involves the formation of a high-energy phosphoric-sulfuric acid anhydride bond driven by GTP hydrolysis by CysN coupled to ATP hydrolysis by CysD. This chain is Sulfate adenylyltransferase subunit 2, found in Acinetobacter baylyi (strain ATCC 33305 / BD413 / ADP1).